We begin with the raw amino-acid sequence, 132 residues long: Small ribosomal subunit protein eS12 (132 aa).

Ala2 carries the post-translational modification N-acetylalanine. Lys129 is modified (N6-succinyllysine).

Belongs to the eukaryotic ribosomal protein eS12 family. Part of the small subunit (SSU) processome, composed of more than 70 proteins and the RNA chaperone small nucleolar RNA (snoRNA) U3. Subunit of the 40S ribosomal complex.

It is found in the nucleus. Its subcellular location is the nucleolus. Its function is as follows. Part of the small subunit (SSU) processome, first precursor of the small eukaryotic ribosomal subunit. During the assembly of the SSU processome in the nucleolus, many ribosome biogenesis factors, an RNA chaperone and ribosomal proteins associate with the nascent pre-rRNA and work in concert to generate RNA folding, modifications, rearrangements and cleavage as well as targeted degradation of pre-ribosomal RNA by the RNA exosome. Subunit of the 40S ribosomal complex. This chain is Small ribosomal subunit protein eS12 (Rps12), found in Mus musculus (Mouse).